A 141-amino-acid polypeptide reads, in one-letter code: Large ribosomal subunit protein bL17 (141 aa).

It belongs to the bacterial ribosomal protein bL17 family. Part of the 50S ribosomal subunit. Contacts protein L32.

This chain is Large ribosomal subunit protein bL17, found in Gluconacetobacter diazotrophicus (strain ATCC 49037 / DSM 5601 / CCUG 37298 / CIP 103539 / LMG 7603 / PAl5).